The sequence spans 148 residues: MIDVVEIQKILPHRFPFLLIDRVVELEPAKNIVAYKNVTIGEPIFQGHFPGHPIYPGVMIIEGMAQAGGVLAFKSMSDEHQAGIENKVVYFMSIDGAKFRHPVRPGDRLEYRLNVLKHKGNIWVLEGKAYVDDVLCAEAELKAMIVDK.

His48 is an active-site residue.

The protein belongs to the thioester dehydratase family. FabZ subfamily.

It localises to the cytoplasm. The enzyme catalyses a (3R)-hydroxyacyl-[ACP] = a (2E)-enoyl-[ACP] + H2O. Functionally, involved in unsaturated fatty acids biosynthesis. Catalyzes the dehydration of short chain beta-hydroxyacyl-ACPs and long chain saturated and unsaturated beta-hydroxyacyl-ACPs. This is 3-hydroxyacyl-[acyl-carrier-protein] dehydratase FabZ from Campylobacter concisus (strain 13826).